A 166-amino-acid chain; its full sequence is Lipoprotein signal peptidase (166 aa).

Helical transmembrane passes span 12–32, 70–90, and 102–122; these read WLWL…LILQ, WFFA…MYRS, and ALII…GFVV. Active-site residues include Asp123 and Asp141. A helical membrane pass occupies residues 137-157; sequence FNLADTAICIGAALIVLEGFL.

This sequence belongs to the peptidase A8 family.

It is found in the cell inner membrane. It carries out the reaction Release of signal peptides from bacterial membrane prolipoproteins. Hydrolyzes -Xaa-Yaa-Zaa-|-(S,diacylglyceryl)Cys-, in which Xaa is hydrophobic (preferably Leu), and Yaa (Ala or Ser) and Zaa (Gly or Ala) have small, neutral side chains.. Its pathway is protein modification; lipoprotein biosynthesis (signal peptide cleavage). This protein specifically catalyzes the removal of signal peptides from prolipoproteins. This Salmonella paratyphi A (strain ATCC 9150 / SARB42) protein is Lipoprotein signal peptidase.